The chain runs to 527 residues: Pyruvate kinase 1, cytosolic (527 aa).

Residue R58 coordinates substrate. K(+)-binding residues include D60, S62, D92, and T93. An ATP-binding site is contributed by 60–63 (DFSW). K256 is a substrate binding site. Mg(2+) is bound at residue E258. The substrate site is built by G281, N282, and T313. Mg(2+) is bound at residue N282.

The protein belongs to the pyruvate kinase family. In terms of assembly, homotetramer. The cofactor is Mg(2+). K(+) serves as cofactor.

It localises to the cytoplasm. The protein localises to the cytosol. The enzyme catalyses pyruvate + ATP = phosphoenolpyruvate + ADP + H(+). The protein operates within carbohydrate degradation; glycolysis; pyruvate from D-glyceraldehyde 3-phosphate: step 5/5. Functionally, key regulatory enzyme of the glycolytic pathway that catalyzes the final step of glycolysis, converting ADP and phosphoenolpyruvate (PEP) to ATP and pyruvate by essentially irreversible transphosphorylation. Is critical for plant growth and development. This chain is Pyruvate kinase 1, cytosolic, found in Oryza sativa subsp. indica (Rice).